We begin with the raw amino-acid sequence, 554 residues long: Hydroxylamine reductase (554 aa).

[2Fe-2S] cluster-binding residues include cysteine 3, cysteine 6, cysteine 18, and cysteine 25. 8 residues coordinate hybrid [4Fe-2O-2S] cluster: histidine 252, glutamate 276, cysteine 320, cysteine 408, cysteine 436, cysteine 461, glutamate 495, and lysine 497. Residue cysteine 408 is modified to Cysteine persulfide.

Belongs to the HCP family. Requires [2Fe-2S] cluster as cofactor. Hybrid [4Fe-2O-2S] cluster is required as a cofactor.

Its subcellular location is the cytoplasm. It carries out the reaction A + NH4(+) + H2O = hydroxylamine + AH2 + H(+). In terms of biological role, catalyzes the reduction of hydroxylamine to form NH(3) and H(2)O. In Shewanella baltica (strain OS223), this protein is Hydroxylamine reductase.